Consider the following 268-residue polypeptide: MDIVKNYLIAFDQYTANFRWESGVTPLSSYVFPFSTSVIYVLVIFALQAIMKNKKGMVLKGFSIIHNINLIILSFSMMSGVMYAAYQQYLEQGAFSLVCEQSSQSVQGRIGFWIYIFYLSKYYELVDTVILALKKKPIIFLHIFHHMAMVPVTWQWLHDQWLVGSWWCTLVNSFIHVLMYYYYLQTTLGNPCWFKKYITKAQIVQFLTGTAMVSYWFVIRDSEKCQAPLSPAIVSNTINSFFIILFGKFYYDSYKSNSRRQEKLNKVE.

7 consecutive transmembrane segments (helical) span residues 31 to 51 (VFPFSTSVIYVLVIFALQAIM), 62 to 82 (FSIIHNINLIILSFSMMSGVM), 110 to 130 (IGFWIYIFYLSKYYELVDTVI), 137 to 157 (PIIFLHIFHHMAMVPVTWQWL), 161 to 181 (WLVGSWWCTLVNSFIHVLMYY), 198 to 218 (ITKAQIVQFLTGTAMVSYWFV), and 227 to 247 (APLSPAIVSNTINSFFIILFG).

This sequence belongs to the ELO family.

Its subcellular location is the membrane. The catalysed reaction is a very-long-chain acyl-CoA + malonyl-CoA + H(+) = a very-long-chain 3-oxoacyl-CoA + CO2 + CoA. Its function is as follows. Could be implicated in synthesis of very long chain fatty acids. This is Fatty acid elongase sre1 (sre1) from Dictyostelium discoideum (Social amoeba).